Here is a 469-residue protein sequence, read N- to C-terminus: Type II secretion system protein HxcR (469 aa).

Residue 246-253 (GPTGSGKT) participates in ATP binding.

This sequence belongs to the GSP E family.

The protein localises to the cytoplasm. The catalysed reaction is ATP + H2O + cellular proteinSide 1 = ADP + phosphate + cellular proteinSide 2.. Its function is as follows. ATPase component of the type II secretion system required for the energy-dependent secretion of extracellular factors from the periplasm. Acts as a molecular motor to provide the energy that is required for the export of proteins. The Hxc system is involved in the secretion of low-molecular-weight alkaline phosphatase L-AP (LapA). Is probably also involved in the secretion of the phosphate-binding protein PstS. The polypeptide is Type II secretion system protein HxcR (Pseudomonas aeruginosa (strain ATCC 15692 / DSM 22644 / CIP 104116 / JCM 14847 / LMG 12228 / 1C / PRS 101 / PAO1)).